A 142-amino-acid chain; its full sequence is E1B protein, small T-antigen (142 aa).

The protein belongs to the adenoviridae E1B 19 kDa protein family.

The protein localises to the host cell membrane. Its subcellular location is the host nucleus envelope. It localises to the host nucleus lamina. Functionally, putative adenovirus Bcl-2 homolog that inhibits apoptosis induced by TNF or FAS pathways, as well as p53-mediated apoptosis. Without E1B 19K function, virus production is compromised because of premature death of host cell. Interacts with Bax protein in cell lysates. This chain is E1B protein, small T-antigen, found in Homo sapiens (Human).